The primary structure comprises 168 residues: Endoribonuclease YbeY (168 aa).

Zn(2+) contacts are provided by H126, H130, and H136.

This sequence belongs to the endoribonuclease YbeY family. It depends on Zn(2+) as a cofactor.

It is found in the cytoplasm. Single strand-specific metallo-endoribonuclease involved in late-stage 70S ribosome quality control and in maturation of the 3' terminus of the 16S rRNA. The sequence is that of Endoribonuclease YbeY from Rhizobium meliloti (strain 1021) (Ensifer meliloti).